A 406-amino-acid chain; its full sequence is Alpha-1-antitrypsin (406 aa).

Residues 1-24 form the signal peptide; that stretch reads MTSSISWGLLLLAGLCCLVPSFLA. The residue at position 33 (serine 33) is a Phosphoserine. Residues asparagine 59, asparagine 96, and asparagine 260 are each glycosylated (N-linked (GlcNAc...) asparagine). The RCL stretch occupies residues 362–381; it reads GTTVLEAVPMSIPPDVCFKN. Phosphoserine is present on serine 372.

Belongs to the serpin family. Interacts with CELA2A. Interacts with ERGIC3 and LMAN1/ERGIC53. Interacts with PRSS1/Trypsin. Plasma.

It is found in the secreted. Functionally, inhibitor of serine proteases. Can inhibit elastase, trypsin, chymotrypsin and plasmin. In Meriones unguiculatus (Mongolian jird), this protein is Alpha-1-antitrypsin.